Reading from the N-terminus, the 161-residue chain is Putative sporulation sigma factor-processing peptidase (161 aa).

Asp-38 is a catalytic residue.

Belongs to the peptidase U4 family.

Probably activates the RNA polymerase sigma-35 factor at the stage II of sporulation. This Bacillus thuringiensis subsp. kurstaki protein is Putative sporulation sigma factor-processing peptidase.